The following is a 310-amino-acid chain: Aspartate carbamoyltransferase catalytic subunit 1 (310 aa).

Carbamoyl phosphate is bound by residues R55 and T56. K85 provides a ligand contact to L-aspartate. R106, H134, and Q137 together coordinate carbamoyl phosphate. L-aspartate is bound by residues R167 and R228. L266 and P267 together coordinate carbamoyl phosphate.

This sequence belongs to the aspartate/ornithine carbamoyltransferase superfamily. ATCase family. Heterododecamer (2C3:3R2) of six catalytic PyrB chains organized as two trimers (C3), and six regulatory PyrI chains organized as three dimers (R2).

The enzyme catalyses carbamoyl phosphate + L-aspartate = N-carbamoyl-L-aspartate + phosphate + H(+). Its pathway is pyrimidine metabolism; UMP biosynthesis via de novo pathway; (S)-dihydroorotate from bicarbonate: step 2/3. Functionally, catalyzes the condensation of carbamoyl phosphate and aspartate to form carbamoyl aspartate and inorganic phosphate, the committed step in the de novo pyrimidine nucleotide biosynthesis pathway. In Shewanella halifaxensis (strain HAW-EB4), this protein is Aspartate carbamoyltransferase catalytic subunit 1.